The primary structure comprises 135 residues: Small ribosomal subunit protein uS12 (135 aa).

D89 is subject to 3-methylthioaspartic acid. Positions N108–K135 are disordered. Residues T111–A122 are compositionally biased toward basic residues. The span at K123–K135 shows a compositional bias: basic and acidic residues.

This sequence belongs to the universal ribosomal protein uS12 family. Part of the 30S ribosomal subunit. Contacts proteins S8 and S17. May interact with IF1 in the 30S initiation complex.

With S4 and S5 plays an important role in translational accuracy. In terms of biological role, interacts with and stabilizes bases of the 16S rRNA that are involved in tRNA selection in the A site and with the mRNA backbone. Located at the interface of the 30S and 50S subunits, it traverses the body of the 30S subunit contacting proteins on the other side and probably holding the rRNA structure together. The combined cluster of proteins S8, S12 and S17 appears to hold together the shoulder and platform of the 30S subunit. The sequence is that of Small ribosomal subunit protein uS12 from Helicobacter pylori (strain HPAG1).